Consider the following 250-residue polypeptide: NADH-quinone oxidoreductase subunit C (250 aa).

This sequence belongs to the complex I 30 kDa subunit family. NDH-1 is composed of 14 different subunits. Subunits NuoB, C, D, E, F, and G constitute the peripheral sector of the complex.

The protein resides in the cell inner membrane. It carries out the reaction a quinone + NADH + 5 H(+)(in) = a quinol + NAD(+) + 4 H(+)(out). Functionally, NDH-1 shuttles electrons from NADH, via FMN and iron-sulfur (Fe-S) centers, to quinones in the respiratory chain. The immediate electron acceptor for the enzyme in this species is believed to be ubiquinone. Couples the redox reaction to proton translocation (for every two electrons transferred, four hydrogen ions are translocated across the cytoplasmic membrane), and thus conserves the redox energy in a proton gradient. This is NADH-quinone oxidoreductase subunit C from Xanthomonas oryzae pv. oryzae (strain PXO99A).